The following is a 333-amino-acid chain: Glycerol-3-phosphate dehydrogenase [NAD(P)+] (333 aa).

Positions 11, 34, and 107 each coordinate NADPH. Residues Lys-107, Gly-136, and Ser-138 each coordinate sn-glycerol 3-phosphate. Ala-140 contacts NADPH. Residues Lys-191, Asp-244, Ser-254, Arg-255, and Asn-256 each contribute to the sn-glycerol 3-phosphate site. The active-site Proton acceptor is the Lys-191. Arg-255 provides a ligand contact to NADPH. The NADPH site is built by Ile-279 and Glu-281.

The protein belongs to the NAD-dependent glycerol-3-phosphate dehydrogenase family.

It is found in the cytoplasm. It carries out the reaction sn-glycerol 3-phosphate + NAD(+) = dihydroxyacetone phosphate + NADH + H(+). The catalysed reaction is sn-glycerol 3-phosphate + NADP(+) = dihydroxyacetone phosphate + NADPH + H(+). Its pathway is membrane lipid metabolism; glycerophospholipid metabolism. Its function is as follows. Catalyzes the reduction of the glycolytic intermediate dihydroxyacetone phosphate (DHAP) to sn-glycerol 3-phosphate (G3P), the key precursor for phospholipid synthesis. This is Glycerol-3-phosphate dehydrogenase [NAD(P)+] from Nitrosospira multiformis (strain ATCC 25196 / NCIMB 11849 / C 71).